A 459-amino-acid chain; its full sequence is uncharacterized protein (459 aa).

Belongs to the Rab GDI family.

The protein localises to the cytoplasm. The protein resides in the nucleus. This is an uncharacterized protein from Schizosaccharomyces pombe (strain 972 / ATCC 24843) (Fission yeast).